Consider the following 801-residue polypeptide: MIVTYNWLKEFVDFDLSPQELSDLLTMLGLEVEGVRHVGGGLDEVVVAVVEERSQHPNADKLSLCRVNNGKETLAIVCGAQNFKAGDKVALAQIGAVLPGDFKIKRSKIRGEESCGMLCSEKELGLAAESEGIIILPTDLPLGVPVFDALGLKDTIFEIGLTPNRADCLSVVGIAREIAAKLGTTVKYARPSVKESVVPISERAQVIVEDSDLCPRYTARYIAGCSIGPSPAWLVRRLEAVGMRSINNVVDVTNYVLMEYGHPLHAFDADLLAGGKIVVRRAAAGERFTTLDGQERVLTESDLTIRDGEKGVALAGIMGGENSEIRQETSNILLESAYFNPSAIRRTSKRLGLHTESSHRFERGADVDILVTALDRAASLIAELAGGRVATGTIDVYPRPLPRRTVRFRVDQCNRLLGIQLTADEMAAIFNRLEFKVNVVEPELFDIDVPSCRVDIEREIDLVEEVARLNGYNNIPVTMPKARVFSDRPTRHQRLEKQLRNVMVGQGFSEVITFSFMAPGILDKLLLAHDDPRRSVVRLRNPLVEEQSVMRTTLLPGLLDVAARNINYRMLTLRLFELRRVYLPAEGQELPREPLHLAGIMTGVRYREGWNQERHQVDFYDVKGVIEHILDEFAIGSVVFVQDRLDPYFHPGKACSILCGNELLGSFGELHPDIHDNFGIDQSVYYLDLDFEKLAMVSSDNVAIKPPSRFPDTFRDIAMLIKDETPASTIVECISGLRIREVECAEIFDHYKGSHVPEGFKSIAVRIRYRSHERTLVDNEVTPLHQRIVDTLVKKLAVTIR.

A tRNA-binding domain is found at 39-147 (GGGLDEVVVA…TDLPLGVPVF (109 aa)). In terms of domain architecture, B5 spans 401–477 (LPRRTVRFRV…RLNGYNNIPV (77 aa)). Mg(2+) contacts are provided by Asp455, Asp461, Glu464, and Glu465. An FDX-ACB domain is found at 708–801 (SRFPDTFRDI…LVKKLAVTIR (94 aa)).

This sequence belongs to the phenylalanyl-tRNA synthetase beta subunit family. Type 1 subfamily. In terms of assembly, tetramer of two alpha and two beta subunits. Requires Mg(2+) as cofactor.

Its subcellular location is the cytoplasm. The catalysed reaction is tRNA(Phe) + L-phenylalanine + ATP = L-phenylalanyl-tRNA(Phe) + AMP + diphosphate + H(+). This Geobacter metallireducens (strain ATCC 53774 / DSM 7210 / GS-15) protein is Phenylalanine--tRNA ligase beta subunit.